The chain runs to 60 residues: MAVQQNKKSPSKRGMHRSHDFLVNPATAIEPNTGETHLRHHISPNGFYRGRKVLKTKADE.

Positions 1-60 (MAVQQNKKSPSKRGMHRSHDFLVNPATAIEPNTGETHLRHHISPNGFYRGRKVLKTKADE) are disordered. The segment covering 49-60 (RGRKVLKTKADE) has biased composition (basic residues).

The protein belongs to the bacterial ribosomal protein bL32 family.

The sequence is that of Large ribosomal subunit protein bL32 from Bordetella bronchiseptica (strain ATCC BAA-588 / NCTC 13252 / RB50) (Alcaligenes bronchisepticus).